The primary structure comprises 282 residues: Pantothenate synthetase (282 aa).

30–37 (MGYLHEGH) contributes to the ATP binding site. Catalysis depends on histidine 37, which acts as the Proton donor. Glutamine 61 contacts (R)-pantoate. Position 61 (glutamine 61) interacts with beta-alanine. ATP is bound at residue 147 to 150 (GMKD). Residue glutamine 153 coordinates (R)-pantoate. ATP contacts are provided by residues valine 176 and 184-187 (KSSR).

The protein belongs to the pantothenate synthetase family. Homodimer.

The protein localises to the cytoplasm. It carries out the reaction (R)-pantoate + beta-alanine + ATP = (R)-pantothenate + AMP + diphosphate + H(+). It functions in the pathway cofactor biosynthesis; (R)-pantothenate biosynthesis; (R)-pantothenate from (R)-pantoate and beta-alanine: step 1/1. Catalyzes the condensation of pantoate with beta-alanine in an ATP-dependent reaction via a pantoyl-adenylate intermediate. This chain is Pantothenate synthetase, found in Bacillus cereus (strain G9842).